Here is a 455-residue protein sequence, read N- to C-terminus: N(6)-adenosine-methyltransferase non-catalytic subunit METTL14 (455 aa).

A disordered region spans residues 21 to 96 (QQLGAESPDS…QHQEESGPYE (76 aa)). Residues 37-51 (SKDEQKEIEETRETC) are compositionally biased toward basic and acidic residues. A compositionally biased stretch (acidic residues) spans 69 to 82 (EGEDPEEDVEEQKE). Interaction with METTL3 regions lie at residues 134–135 (RD) and 236–237 (SG). Positions 244–253 (RMCLRKWGFR) are positively charged region required for RNA-binding. Interaction with METTL3 regions lie at residues 254–257 (RCED) and 277–286 (KAVFQRTKEH). Positions 296–297 (RR) are positively charged region required for RNA-binding. The interval 307 to 311 (NVDID) is interaction with METTL3. The segment at 392–455 (ERLRPKSPPP…GGPHRGFPPR (64 aa)) is disordered. Residues 407–421 (RGGGAPRGGRGGPAA) show a composition bias toward gly residues. Residues 423-441 (RGDRGRERNRPNFRGDRGG) are compositionally biased toward basic and acidic residues.

It belongs to the MT-A70-like family. In terms of assembly, heterodimer; heterodimerizes with mettl3 to form an antiparallel heterodimer that constitutes an active methyltransferase. Component of the WMM complex, a N6-methyltransferase complex composed of a catalytic subcomplex, named MAC, and of an associated subcomplex, named MACOM. The MAC subcomplex is composed of mettl3 and mettl14.

The protein resides in the nucleus. Its function is as follows. The METTL3-METTL14 heterodimer forms a N6-methyltransferase complex that methylates adenosine residues at the N(6) position of some mRNAs and regulates the circadian clock, differentiation of embryonic stem cells and cortical neurogenesis. In the heterodimer formed with mettl3, mettl14 constitutes the RNA-binding scaffold that recognizes the substrate rather than the catalytic core. N6-methyladenosine (m6A), which takes place at the 5'-[AG]GAC-3' consensus sites of some mRNAs, plays a role in mRNA stability and processing. In Danio rerio (Zebrafish), this protein is N(6)-adenosine-methyltransferase non-catalytic subunit METTL14 (mettl14).